The following is a 354-amino-acid chain: Uroporphyrinogen decarboxylase (354 aa).

Substrate-binding positions include 27–31 (RQAGR), Phe46, Asp77, Tyr154, Thr209, and His327.

This sequence belongs to the uroporphyrinogen decarboxylase family. As to quaternary structure, homodimer.

It is found in the cytoplasm. The enzyme catalyses uroporphyrinogen III + 4 H(+) = coproporphyrinogen III + 4 CO2. It functions in the pathway porphyrin-containing compound metabolism; protoporphyrin-IX biosynthesis; coproporphyrinogen-III from 5-aminolevulinate: step 4/4. Its function is as follows. Catalyzes the decarboxylation of four acetate groups of uroporphyrinogen-III to yield coproporphyrinogen-III. In Escherichia coli O157:H7, this protein is Uroporphyrinogen decarboxylase.